Here is a 480-residue protein sequence, read N- to C-terminus: Aspartyl/glutamyl-tRNA(Asn/Gln) amidotransferase subunit B (480 aa).

The protein belongs to the GatB/GatE family. GatB subfamily. In terms of assembly, heterotrimer of A, B and C subunits.

It catalyses the reaction L-glutamyl-tRNA(Gln) + L-glutamine + ATP + H2O = L-glutaminyl-tRNA(Gln) + L-glutamate + ADP + phosphate + H(+). It carries out the reaction L-aspartyl-tRNA(Asn) + L-glutamine + ATP + H2O = L-asparaginyl-tRNA(Asn) + L-glutamate + ADP + phosphate + 2 H(+). Functionally, allows the formation of correctly charged Asn-tRNA(Asn) or Gln-tRNA(Gln) through the transamidation of misacylated Asp-tRNA(Asn) or Glu-tRNA(Gln) in organisms which lack either or both of asparaginyl-tRNA or glutaminyl-tRNA synthetases. The reaction takes place in the presence of glutamine and ATP through an activated phospho-Asp-tRNA(Asn) or phospho-Glu-tRNA(Gln). This is Aspartyl/glutamyl-tRNA(Asn/Gln) amidotransferase subunit B from Streptococcus pneumoniae (strain CGSP14).